The sequence spans 344 residues: Arginine N-succinyltransferase (344 aa).

L125 provides a ligand contact to succinyl-CoA. The active-site Proton donor is H229.

This sequence belongs to the arginine N-succinyltransferase family.

The catalysed reaction is succinyl-CoA + L-arginine = N(2)-succinyl-L-arginine + CoA + H(+). It functions in the pathway amino-acid degradation; L-arginine degradation via AST pathway; L-glutamate and succinate from L-arginine: step 1/5. Catalyzes the transfer of succinyl-CoA to arginine to produce N(2)-succinylarginine. The protein is Arginine N-succinyltransferase of Escherichia coli O6:H1 (strain CFT073 / ATCC 700928 / UPEC).